Reading from the N-terminus, the 90-residue chain is Acyl-CoA-binding protein (90 aa).

Over residues 1 to 16 the composition is skewed to basic and acidic residues; the sequence is MGLKEDFEEHAEKAKT. The interval 1–20 is disordered; the sequence is MGLKEDFEEHAEKAKTLPEN. Residues 3–88 form the ACB domain; it reads LKEDFEEHAE…VKQLLGEAAA (86 aa). An acyl-CoA contacts are provided by residues 30–34, K56, and Y75; that span reads YGLYK.

Belongs to the ACBP family.

In terms of biological role, binds medium- and long-chain acyl-CoA esters with very high affinity and may function as an intracellular carrier of acyl-CoA esters. In Ricinus communis (Castor bean), this protein is Acyl-CoA-binding protein.